We begin with the raw amino-acid sequence, 169 residues long: Pyrophosphate-energized proton pump 1 (169 aa).

The next 3 membrane-spanning stretches (helical) occupy residues 45 to 65 (YVVAGLLFGGLIPYLFGGIAM), 114 to 134 (VIPSLLPVLAPLVVYFGVLLI), and 141 to 161 (AFAALGAYLLAVIMNRVLVAI).

This sequence belongs to the H(+)-translocating pyrophosphatase (TC 3.A.10) family. As to quaternary structure, homodimer. It depends on Mg(2+) as a cofactor.

It is found in the cell inner membrane. The enzyme catalyses diphosphate + H2O + H(+)(in) = 2 phosphate + 2 H(+)(out). Proton pump that utilizes the energy of pyrophosphate hydrolysis as the driving force for proton movement across the membrane. Generates a proton motive force. This is Pyrophosphate-energized proton pump 1 (hppA1) from Rhizobium leguminosarum bv. trifolii.